The sequence spans 299 residues: ATP phosphoribosyltransferase (299 aa).

Belongs to the ATP phosphoribosyltransferase family. Long subfamily. Equilibrium between an active dimeric form, an inactive hexameric form and higher aggregates. Interconversion between the various forms is largely reversible and is influenced by the natural substrates and inhibitors of the enzyme. The cofactor is Mg(2+).

It localises to the cytoplasm. The enzyme catalyses 1-(5-phospho-beta-D-ribosyl)-ATP + diphosphate = 5-phospho-alpha-D-ribose 1-diphosphate + ATP. Its pathway is amino-acid biosynthesis; L-histidine biosynthesis; L-histidine from 5-phospho-alpha-D-ribose 1-diphosphate: step 1/9. Its activity is regulated as follows. Feedback inhibited by histidine. Its function is as follows. Catalyzes the condensation of ATP and 5-phosphoribose 1-diphosphate to form N'-(5'-phosphoribosyl)-ATP (PR-ATP). Has a crucial role in the pathway because the rate of histidine biosynthesis seems to be controlled primarily by regulation of HisG enzymatic activity. This Escherichia coli O8 (strain IAI1) protein is ATP phosphoribosyltransferase.